We begin with the raw amino-acid sequence, 148 residues long: Lysozyme C (148 aa).

The signal sequence occupies residues 1-18 (MKAVIILGLVLLSVTVQG). Positions 19–148 (KIFERCELAR…VSQYVQGCGV (130 aa)) constitute a C-type lysozyme domain. 4 disulfides stabilise this stretch: cysteine 24/cysteine 146, cysteine 48/cysteine 134, cysteine 83/cysteine 99, and cysteine 95/cysteine 113. Catalysis depends on residues glutamate 53 and aspartate 71.

This sequence belongs to the glycosyl hydrolase 22 family. In terms of assembly, monomer.

Its subcellular location is the secreted. The enzyme catalyses Hydrolysis of (1-&gt;4)-beta-linkages between N-acetylmuramic acid and N-acetyl-D-glucosamine residues in a peptidoglycan and between N-acetyl-D-glucosamine residues in chitodextrins.. Functionally, lysozymes have primarily a bacteriolytic function; those in tissues and body fluids are associated with the monocyte-macrophage system and enhance the activity of immunoagents. This Macaca mulatta (Rhesus macaque) protein is Lysozyme C (LYZ).